Reading from the N-terminus, the 829-residue chain is Protein kintoun (829 aa).

Disordered stretches follow at residues 197-255, 349-377, 400-465, and 478-505; these read VLRT…APTE, LPVAPTASRPEPAASPEEAADPPGTDGAA, PSRT…SWGD, and RPTLGVEARETREGTGREPAYRAMGGPG. Residues 352-371 are compositionally biased toward low complexity; that stretch reads APTASRPEPAASPEEAADPP. The span at 416-430 shows a compositional bias: basic and acidic residues; that stretch reads PGKERVAKSEERDFG. Serine 450 is modified (phosphoserine). Basic and acidic residues predominate over residues 484–497; that stretch reads EARETREGTGREPA. The residue at position 632 (serine 632) is a Phosphoserine. The disordered stretch occupies residues 667–698; that stretch reads NSEQLHEKEERVHEGSPLTEKENTEHATISTT. The span at 670–691 shows a compositional bias: basic and acidic residues; sequence QLHEKEERVHEGSPLTEKENTE.

This sequence belongs to the PIH1 family. Kintoun subfamily. As to quaternary structure, interacts with CFAP300. Interacts with DNAI2 and HSPA1A. Interacts with DNAAF4. Interacts with DNAAF6/PIH1D3.

The protein localises to the cytoplasm. It is found in the dynein axonemal particle. Its function is as follows. Required for cytoplasmic pre-assembly of axonemal dyneins, thereby playing a central role in motility in cilia and flagella. Involved in pre-assembly of dynein arm complexes in the cytoplasm before intraflagellar transport loads them for the ciliary compartment. The protein is Protein kintoun of Bos taurus (Bovine).